The primary structure comprises 373 residues: P2Y purinoceptor 1 (373 aa).

The Extracellular segment spans residues 1–51 (MTEVPWSVVPNGTDAAFLAGLGSLWGNSTVASTAAVSSSFQCALTKTGFQF). 2 N-linked (GlcNAc...) asparagine glycosylation sites follow: Asn11 and Asn27. Cystine bridges form between Cys42-Cys296 and Cys124-Cys202. Lys46 is an ADP binding site. Residues 52–74 (YYLPAVYILVFIIGFLGNSVAIW) traverse the membrane as a helical segment. Residues 75 to 87 (MFVFHMKPWSGIS) lie on the Cytoplasmic side of the membrane. Residues 88-109 (VYMFNLALADFLYVLTLPALIF) traverse the membrane as a helical segment. Residues 110 to 125 (YYFNKTDWIFGDAMCK) lie on the Extracellular side of the membrane. Asn113 carries N-linked (GlcNAc...) asparagine glycosylation. Residues 126 to 147 (LQRFIFHVNLYGSILFLTCISA) form a helical membrane-spanning segment. Over 148–166 (HRYSGVVYPLKSLGRLKKK) the chain is Cytoplasmic. A helical transmembrane segment spans residues 167 to 188 (NAIYVSVLVWLIVVVAISPILF). Topologically, residues 189–214 (YSGTGTRKNKTVTCYDTTSNDYLRSY) are extracellular. Asn197 is a glycosylation site (N-linked (GlcNAc...) asparagine). 203 to 205 (YDT) lines the ADP pocket. The helical transmembrane segment at 215 to 237 (FIYSMCTTVAMFCIPLVLILGCY) threads the bilayer. The Cytoplasmic portion of the chain corresponds to 238 to 260 (GLIVKALIYNDLDNSPLRRKSIY). The chain crosses the membrane as a helical span at residues 261 to 284 (LVIIVLTVFAVSYIPFHVMKTMNL). Residues 283–287 (NLRAR), 303–306 (YATY), and Arg310 each bind ADP. The Extracellular segment spans residues 285–303 (RARLDFQTPEMCDFNDRVY). The chain crosses the membrane as a helical span at residues 304–325 (ATYQVTRGLASLNSCVDPILYF). Topologically, residues 326-373 (LAGDTFRRRLSRATRKASRRSEANLQSKSEEMTLNILSEFKQNGDTSL) are cytoplasmic.

It belongs to the G-protein coupled receptor 1 family.

Its subcellular location is the cell membrane. Functionally, receptor for extracellular adenine nucleotides such as ADP. In platelets, binding to ADP leads to mobilization of intracellular calcium ions via activation of phospholipase C, a change in platelet shape, and ultimately platelet aggregation. This is P2Y purinoceptor 1 (P2ry1) from Mus musculus (Mouse).